The following is a 196-amino-acid chain: Large ribosomal subunit protein uL5 (196 aa).

This sequence belongs to the universal ribosomal protein uL5 family. In terms of assembly, part of the 50S ribosomal subunit; part of the 5S rRNA/L5/L18/L25 subcomplex. Contacts the 5S rRNA and the P site tRNA. Forms a bridge to the 30S subunit in the 70S ribosome.

This is one of the proteins that bind and probably mediate the attachment of the 5S RNA into the large ribosomal subunit, where it forms part of the central protuberance. In the 70S ribosome it contacts protein S13 of the 30S subunit (bridge B1b), connecting the 2 subunits; this bridge is implicated in subunit movement. Contacts the P site tRNA; the 5S rRNA and some of its associated proteins might help stabilize positioning of ribosome-bound tRNAs. The chain is Large ribosomal subunit protein uL5 from Rhodopirellula baltica (strain DSM 10527 / NCIMB 13988 / SH1).